A 234-amino-acid chain; its full sequence is Phosphoribosylaminoimidazole-succinocarboxamide synthase (234 aa).

This sequence belongs to the SAICAR synthetase family.

It carries out the reaction 5-amino-1-(5-phospho-D-ribosyl)imidazole-4-carboxylate + L-aspartate + ATP = (2S)-2-[5-amino-1-(5-phospho-beta-D-ribosyl)imidazole-4-carboxamido]succinate + ADP + phosphate + 2 H(+). It functions in the pathway purine metabolism; IMP biosynthesis via de novo pathway; 5-amino-1-(5-phospho-D-ribosyl)imidazole-4-carboxamide from 5-amino-1-(5-phospho-D-ribosyl)imidazole-4-carboxylate: step 1/2. The polypeptide is Phosphoribosylaminoimidazole-succinocarboxamide synthase (Streptococcus pyogenes serotype M1).